Here is a 260-residue protein sequence, read N- to C-terminus: Global transcriptional regulator CodY (260 aa).

The GAF domain stretch occupies residues 1 to 159 (MPNLLEKTRK…SSTVVGIQLL (159 aa)). Positions 207–226 (ASVIADRIGITRSVIVNALR) form a DNA-binding region, H-T-H motif.

This sequence belongs to the CodY family.

The protein resides in the cytoplasm. Its function is as follows. DNA-binding global transcriptional regulator which is involved in the adaptive response to starvation and acts by directly or indirectly controlling the expression of numerous genes in response to nutrient availability. During rapid exponential growth, CodY is highly active and represses genes whose products allow adaptation to nutrient depletion. In Streptococcus pyogenes serotype M1, this protein is Global transcriptional regulator CodY.